The following is a 455-amino-acid chain: Kynureninase (455 aa).

Residues Leu-94, Thr-95, 122–125 (FPSD), Asp-208, His-211, and Tyr-233 each bind pyridoxal 5'-phosphate. Lys-234 is modified (N6-(pyridoxal phosphate)lysine). Pyridoxal 5'-phosphate is bound by residues Trp-275 and Asn-303.

The protein belongs to the kynureninase family. Homodimer. The cofactor is pyridoxal 5'-phosphate.

Its subcellular location is the cytoplasm. It catalyses the reaction L-kynurenine + H2O = anthranilate + L-alanine + H(+). It carries out the reaction 3-hydroxy-L-kynurenine + H2O = 3-hydroxyanthranilate + L-alanine + H(+). It participates in amino-acid degradation; L-kynurenine degradation; L-alanine and anthranilate from L-kynurenine: step 1/1. The protein operates within cofactor biosynthesis; NAD(+) biosynthesis; quinolinate from L-kynurenine: step 2/3. Its function is as follows. Catalyzes the cleavage of L-kynurenine (L-Kyn) and L-3-hydroxykynurenine (L-3OHKyn) into anthranilic acid (AA) and 3-hydroxyanthranilic acid (3-OHAA), respectively. The polypeptide is Kynureninase (Vanderwaltozyma polyspora (strain ATCC 22028 / DSM 70294 / BCRC 21397 / CBS 2163 / NBRC 10782 / NRRL Y-8283 / UCD 57-17) (Kluyveromyces polysporus)).